The sequence spans 494 residues: MKLNKIMLAMVVMSISGTAMAHGYIENPPSRNFLCNAQGGSLNKDCGGVQYEPQSSGETADGFPQQGPVDGKLASGDNWVSVNLNQQTAERWTKVKMKAGPQEFKWKFTAAHPIADFKYYMTKQDWNPNQPLTRDSLDLTPFCVIPGGPASTTGSTTHTCNIPERTGYQVIYGAWDVSDTPGTFYNMIDAEFDGATGEVVVSEWTKSIGNIEPHDDLNAGDTVKLRMFDQQGERSDLVVEITIADAKEGKKNNWSHALASKLNNTHQDIRAGKKDSKGTVTATHGANAIFINANSNILRAEVQIEKSPAGEVSATDASFSANGMKKEYQMADGALAIHFDVKTMGSMDLEAKVFAADNSVKGYKDMTLEDASQHVSIAMTGLKAGKHTLVILGTDAQGKTQQQSIDFMVKGETVKPEVKPEVKPEVDGANKQCTAPAWSNKSSYQAKDTVTHNGRIYMSKWWADKASVPGDAAVTDTTGNGSGWGKVWEDKGAC.

Residues 1 to 21 (MKLNKIMLAMVVMSISGTAMA) form the signal peptide. The Chitin-binding type-4 domain occupies 22–192 (HGYIENPPSR…TFYNMIDAEF (171 aa)). A Chitin-binding type-3 domain is found at 435 to 484 (APAWSNKSSYQAKDTVTHNGRIYMSKWWADKASVPGDAAVTDTTGNGSGW). The disordered stretch occupies residues 474 to 494 (VTDTTGNGSGWGKVWEDKGAC).

The protein belongs to the GbpA family.

Its subcellular location is the secreted. Probably interacts with GlcNAc residues. May promote attachment to both epithelial cell surfaces and chitin. The protein is GlcNAc-binding protein A of Yersinia enterocolitica serotype O:8 / biotype 1B (strain NCTC 13174 / 8081).